The sequence spans 217 residues: MSGLSESAQLVKQALEKRGLETPMVPNQFSREEKKEKIEHHMREILSLLELDLTDDSLEETPRRIAKMYVDEVFSGLDYQNFPKITVIENKMNVSEMVRVKEITLTSTCEHHLVTIDGKAAVAYIPRGKIIGLSKINRIVRFFAQRPQVQERMTQQILVALQTLLESDDVAVTIDATHYCVKSRGVMDATSETTTTALGGIFKSNPATRAEFLHGLR.

Cysteine 109, histidine 112, and cysteine 180 together coordinate Zn(2+).

This sequence belongs to the GTP cyclohydrolase I family. Toroid-shaped homodecamer, composed of two pentamers of five dimers.

The enzyme catalyses GTP + H2O = 7,8-dihydroneopterin 3'-triphosphate + formate + H(+). The protein operates within cofactor biosynthesis; 7,8-dihydroneopterin triphosphate biosynthesis; 7,8-dihydroneopterin triphosphate from GTP: step 1/1. The protein is GTP cyclohydrolase 1 of Vibrio vulnificus (strain CMCP6).